Consider the following 2594-residue polypeptide: Immunoglobulin superfamily member 10 (2594 aa).

The N-terminal stretch at 1 to 25 is a signal peptide; that stretch reads MQKRGREVSCLLISLTAICLVVTPG. Residues 29 to 56 enclose the LRRNT domain; sequence CPRRCACYVPTEVHCTFRYLTSIPDGIP. 6 LRR repeats span residues 58–79, 82–103, 106–127, 130–151, 154–175, and 186–207; these read NVERVNLGYNSLTRLTENDFSG, RLELLMLHSNGIHRVSDKTFSG, SLQVLKMSYNKVQIIEKDTLYG, SLTRLHLDHNNIEFINPEAFYG, LLRLVHLEGNRLTKLHPDTFVS, and FIKYLYLSDNFLTSLPKEMVSS. One can recognise an LRRCT domain in the interval 219–281; the sequence is NPWTCDCHLK…VPSGSFLCTK (63 aa). N-linked (GlcNAc...) asparagine glycosylation is present at Asn-439. 2 consecutive Ig-like C2-type domains span residues 461–567 and 571–661; these read PKAE…YRIT and PYVE…FQVS. Cystine bridges form between Cys-497-Cys-551 and Cys-595-Cys-645. N-linked (GlcNAc...) asparagine glycosylation occurs at Asn-627. Over residues 670-685 the composition is skewed to basic and acidic residues; that stretch reads IEHDRDIDGSGLEEPK. Disordered regions lie at residues 670–725 and 963–1008; these read IEHD…RDLT and VSSN…GRER. Residues 715–725 are compositionally biased toward basic residues; it reads IHKKNKHRDLT. Basic and acidic residues predominate over residues 972–984; sequence TTKDPGFSKRPSD. Polar residues predominate over residues 985–1003; that stretch reads SHTTAPSLFQTPRNNSTGN. An N-linked (GlcNAc...) asparagine glycan is attached at Asn-1044. 3 disordered regions span residues 1228–1251, 1333–1364, and 1428–1457; these read TATKPPEKAPLLPTDHGSSSPSTT, VRSKKAKDQTKGSLKNRKGPTITPRQISGYST, and SQESTAMKRASATPPLLSSGAPRMPTPSPP. The segment covering 1333–1342 has biased composition (basic and acidic residues); it reads VRSKKAKDQT. Positions 1355 to 1364 are enriched in polar residues; that stretch reads TPRQISGYST. 10 Ig-like C2-type domains span residues 1619 to 1710, 1715 to 1807, 1812 to 1901, 1912 to 2005, 2008 to 2106, 2112 to 2200, 2205 to 2302, 2308 to 2398, 2403 to 2493, and 2499 to 2592; these read PRII…VTLS, PARI…VKIQ, PPVI…RRVV, PRIE…VRLR, PAKI…VHLT, PRIR…YKLD, PPLI…LKVL, PTFR…ILLE, PVIL…VPVT, and PRII…TYIQ. 3 cysteine pairs are disulfide-bonded: Cys-1641–Cys-1694, Cys-1738–Cys-1791, and Cys-1835–Cys-1888. The LRR 11 repeat unit spans residues 1658–1681; it reads SGREISRGIQKTRFHVLPNGTLSI. Asn-1676, Asn-1780, Asn-1870, and Asn-1933 each carry an N-linked (GlcNAc...) asparagine glycan. 7 cysteine pairs are disulfide-bonded: Cys-1934-Cys-1987, Cys-2031-Cys-2090, Cys-2134-Cys-2184, Cys-2232-Cys-2284, Cys-2330-Cys-2382, Cys-2425-Cys-2477, and Cys-2521-Cys-2576. N-linked (GlcNAc...) asparagine glycosylation occurs at Asn-2072. N-linked (GlcNAc...) asparagine glycosylation occurs at Asn-2364. Tyr-2574 carries the post-translational modification Phosphotyrosine.

In the embryo, expressed in the nasal mesenchyme.

Its subcellular location is the secreted. Involved in the control of early migration of neurons expressing gonadotropin-releasing hormone (GNRH neurons). May be involved in the maintenance of osteochondroprogenitor cells pool. This chain is Immunoglobulin superfamily member 10 (Igsf10), found in Mus musculus (Mouse).